Consider the following 212-residue polypeptide: Mediator of RNA polymerase II transcription subunit 20 (212 aa).

It belongs to the Mediator complex subunit 20 family. Component of the Mediator complex, which is composed of MED1, MED4, MED6, MED7, MED8, MED9, MED10, MED11, MED12, MED13, MED13L, MED14, MED15, MED16, MED17, MED18, MED19, MED20, MED21, MED22, MED23, MED24, MED25, MED26, MED27, MED29, MED30, MED31, CCNC, CDK8 and CDC2L6/CDK11. The MED12, MED13, CCNC and CDK8 subunits form a distinct module termed the CDK8 module. Mediator containing the CDK8 module is less active than Mediator lacking this module in supporting transcriptional activation. Individual preparations of the Mediator complex lacking one or more distinct subunits have been variously termed ARC, CRSP, DRIP, PC2, SMCC and TRAP. Interacts with PPARG.

The protein localises to the nucleus. Component of the Mediator complex, a coactivator involved in the regulated transcription of nearly all RNA polymerase II-dependent genes. Mediator functions as a bridge to convey information from gene-specific regulatory proteins to the basal RNA polymerase II transcription machinery. Mediator is recruited to promoters by direct interactions with regulatory proteins and serves as a scaffold for the assembly of a functional preinitiation complex with RNA polymerase II and the general transcription factors. The polypeptide is Mediator of RNA polymerase II transcription subunit 20 (Med20) (Mus musculus (Mouse)).